Reading from the N-terminus, the 167-residue chain is Protein-export protein SecB (167 aa).

It belongs to the SecB family. Homotetramer, a dimer of dimers. One homotetramer interacts with 1 SecA dimer.

It is found in the cytoplasm. In terms of biological role, one of the proteins required for the normal export of preproteins out of the cell cytoplasm. It is a molecular chaperone that binds to a subset of precursor proteins, maintaining them in a translocation-competent state. It also specifically binds to its receptor SecA. This is Protein-export protein SecB from Wolbachia pipientis subsp. Culex pipiens (strain wPip).